Here is a 664-residue protein sequence, read N- to C-terminus: MSAEKRELEDSGSNGELKRQDVSFSKGIAHIKAEFIAKSNDNSQFQQAYNDEEIADADRIGAEGGKNSRKHKKKQRGQNKSRDNRQVKEEKVLCPKYIQGYSEDGESLCQFGDKCRFVHDIKEYLSHKKPEIELDQFKICPVFDALGFCPMGFKCRFMSSHFDKENFKLVKRGTDEERQKLWSLDHEVNRITSEEKLSLIKRRFPFTKSNEVLDIIDSIQQEFRDITAPKVSKEEASEDKPKDSNEAEVAPQVLQREEELKKKREHQRELYLKYKDTRYFAQEKKDLDLRRKKIVSPLTTVGNLPYRRLMRKLGADVTYSEMALAVPLIQGTNSEWALPKAHSTEIPGFGVQIACSKAWQAAKAAEALAKFTPDINEINLNSGCPIDLLYRQGSGSALLDNPARMIRCLNAMNYVSDSIPITVKIRTGTRDSHPVADTLVKRLVYETDVAAITLHGRSRQQRYTRVADWDYVSTVAKSLRESEASFLESAEGKESRESKRRIQFVGNGDVNNFEDWHRILNNDENIDSIMVARGALIKPWVFEEVDAQQHLDKSSTERLEILRDYAQFSMEHWGTDEYGIAQCRRFFCEFMSFFHRYIPIGICERYPVQLNERPPNWVGRDDLETLMGSTDARDWIKLSEMFFGKVEESFVFTPKHKSSSFPSA.

Disordered regions lie at residues 1-22 (MSAE…RQDV) and 47-87 (QAYN…NRQV). Residues 67-79 (NSRKHKKKQRGQN) show a composition bias toward basic residues. 2 C3H1-type zinc fingers span residues 88 to 122 (KEEK…HDIK) and 134 to 164 (LDQF…HFDK). Residues 230-245 (KVSKEEASEDKPKDSN) show a composition bias toward basic and acidic residues. The disordered stretch occupies residues 230–261 (KVSKEEASEDKPKDSNEAEVAPQVLQREEELK). FMN-binding positions include 297–299 (PLT) and glutamine 352. Catalysis depends on cysteine 384, which acts as the Proton donor. Residues lysine 424, histidine 455, 507–509 (NGD), and 532–533 (AR) each bind FMN.

Belongs to the Dus family. Dus3 subfamily. FMN is required as a cofactor.

Its subcellular location is the cytoplasm. It localises to the nucleus. The enzyme catalyses 5,6-dihydrouridine(47) in tRNA + NAD(+) = uridine(47) in tRNA + NADH + H(+). The catalysed reaction is 5,6-dihydrouridine(47) in tRNA + NADP(+) = uridine(47) in tRNA + NADPH + H(+). It carries out the reaction a 5,6-dihydrouridine in mRNA + NAD(+) = a uridine in mRNA + NADH + H(+). It catalyses the reaction a 5,6-dihydrouridine in mRNA + NADP(+) = a uridine in mRNA + NADPH + H(+). Catalyzes the synthesis of dihydrouridine, a modified base found in the D-loop of most tRNAs. Specifically modifies U47 in cytoplasmic tRNAs. Catalyzes the synthesis of dihydrouridine in some mRNAs, thereby affecting their translation. This is tRNA-dihydrouridine(47) synthase [NAD(P)(+)] (DUS3) from Vanderwaltozyma polyspora (strain ATCC 22028 / DSM 70294 / BCRC 21397 / CBS 2163 / NBRC 10782 / NRRL Y-8283 / UCD 57-17) (Kluyveromyces polysporus).